The chain runs to 122 residues: Large ribosomal subunit protein uL14 (122 aa).

The protein belongs to the universal ribosomal protein uL14 family. As to quaternary structure, part of the 50S ribosomal subunit. Forms a cluster with proteins L3 and L19. In the 70S ribosome, L14 and L19 interact and together make contacts with the 16S rRNA in bridges B5 and B8.

Its function is as follows. Binds to 23S rRNA. Forms part of two intersubunit bridges in the 70S ribosome. This Borrelia recurrentis (strain A1) protein is Large ribosomal subunit protein uL14.